A 320-amino-acid chain; its full sequence is MGRKKIALIGAGNIGGTLALLAAQKELGDVVLFDVVEGVPQGKALDLSQVGPIAGFDAKISGSNDYADIAGADVIIVTAGVARKPGMSRDDLLGINLKVMKAVGEGIKANAPDAFVICITNPLDAMVWALREFSGLPHSKVVGMAGVLDSARFSHFIADEFDVSVKDVNTFVLGGHGDTMVPVVRYSTVNGIPVPDLVKMGLSSQDKIDAIVKRTRGGGGEIVALLGTGSAFYAPAASGIAMAEAYLGDQKRILPCAAYVDGQYGVDGLYVGVPVMIGAGGVEKIVEIELDDADKAGLQVSVDAVKELLEACKKLDPSLA.

NAD(+)-binding positions include 10 to 15 (GAGNIG) and aspartate 34. 2 residues coordinate substrate: arginine 83 and arginine 89. Residues asparagine 96 and 119–121 (ITN) each bind NAD(+). Substrate-binding residues include asparagine 121 and arginine 152. Histidine 176 functions as the Proton acceptor in the catalytic mechanism.

This sequence belongs to the LDH/MDH superfamily. MDH type 3 family.

It carries out the reaction (S)-malate + NAD(+) = oxaloacetate + NADH + H(+). Its function is as follows. Catalyzes the reversible oxidation of malate to oxaloacetate. The chain is Malate dehydrogenase from Sphingopyxis alaskensis (strain DSM 13593 / LMG 18877 / RB2256) (Sphingomonas alaskensis).